Reading from the N-terminus, the 196-residue chain is Chromophore lyase CpcT/CpeT (196 aa).

It belongs to the CpcT/CpeT biliprotein lyase family.

Its function is as follows. Covalently attaches a chromophore to Cys residue(s) of phycobiliproteins. The chain is Chromophore lyase CpcT/CpeT from Synechococcus sp. (strain WH8020).